A 506-amino-acid polypeptide reads, in one-letter code: Galactose/methyl galactoside import ATP-binding protein MglA (506 aa).

2 consecutive ABC transporter domains span residues 14-249 (LEMK…VGRS) and 264-506 (VMLE…SLYL). 46 to 53 (GENGAGKS) serves as a coordination point for ATP.

The protein belongs to the ABC transporter superfamily. Galactose/methyl galactoside importer (TC 3.A.1.2.3) family. In terms of assembly, the complex is composed of one ATP-binding protein (MglA), two transmembrane proteins (MglC) and a solute-binding protein (MglB).

Its subcellular location is the cell inner membrane. The enzyme catalyses D-galactose(out) + ATP + H2O = D-galactose(in) + ADP + phosphate + H(+). It catalyses the reaction methyl beta-D-galactoside(out) + ATP + H2O = methyl beta-D-galactoside(in) + ADP + phosphate + H(+). In terms of biological role, part of the ABC transporter complex MglABC involved in galactose/methyl galactoside import. Responsible for energy coupling to the transport system. This chain is Galactose/methyl galactoside import ATP-binding protein MglA, found in Sodalis glossinidius (strain morsitans).